A 2313-amino-acid polypeptide reads, in one-letter code: MLTSKNNDIGNLIEIFRQRDITYKERKATLQKIEELIPKVPDLEALNTKWIYLLDNAVWPLIVKSDRMDLKSLAGKVTRHVGALLFDSPFYPEFLLWLGTLLQNTPKKNDDARADIVFSVYYIVGAISQKSENRLGKNDEEYVRKSLEWLIRVIPNSSSAVYNNCLKGIILISNTFRKVTDDLYESCLRAIVSNFPDFNSHEKNFERLLDTVNLFSDHFSKDPVLAEEMVRIIRPDIKKNGLRNTRELKKRLKLTMAIVKMAKSQQILVETNEMMCELQAELEGNGGKWSSAALITIICDLLNELLILGKNDAEMRQSVEESLGNLLKDLNLSKQNTKEKQAFFNSLAKIVKQLPAESDVKTRIHHIVFNSDTGLFNIQNDDNRIFGHNTIYRDLVNLISVLLTPTSLSHLQATYTDLRKIMMESMSKLKQSERWHESILLLFFSALQGISCAKSSLIVMIGIRPSIFELFCDELPLTEYWLASNHPEVYHIFITILVGHLKAHDFYVSQSDYLVHGETPTGHAYGQTKREYVRKQVIALHKIIGGFGNRLWKKTRFLISTWLHSLVVIARDQKISAESFRLKEWVRLRNTVIQHSVLDWNNESINQALTVLSTVTNWSALPLELNKDITDKTKKATWKEATTIWESGDFKTYIRQSLSTTYQMSQERQQKQIGSTSFGAEEFNLVTNFLLKQIVPTTFKKGPYVWMDEVLETAIQGCKNISQEKSDVPETFMEKWDWIINQTANFCIVNKMKTPLGKPMQTFAAFENEIKRLAKEVINRKSSDKKPKSTTEDVPPPATPPLKFSIQWLRVHLLLKLIEVLEKIMISSIRGGSSIFNLTEIPVTARQFFIMNSSSCEVWLNRVYYPALIVAYFNGYYGLVIRFGSNALNHYARQKGSDEKMITNGVCTACLMSLSMAVLGEPMEIVGLRRRVREEFGTEMGQKLMEALGEMASARYEIALVQLEAILVVDSSINETLRIIIQIAITDMLNRIRLPDAVRYYKKTLFGEDEEAQVAEDFRSIEMLTKFEKLNYGVAEKRQVVDWSARERLQLVESAYSQTMKRNELLELQKEMSAMGALALSADSSCKLYSDISSTSLVIANLVDRMTGTSHWKNQLTDVEMFDRAEEGNEGDKLTICRKLMHWGRHMKHHRGQSFAAHGEIIRFSRKTSNCELAFFHINSAIRGEKLEAWQRLEVERQRLKLVKSQHFDVRVREMNEVFGSLADVFSTSIEMKQKFQNLDDQTKDLMVANGYLSDIAKREEHMSRASIQLADFFDTLPTIDTVLTPNLYNTIIWSEIQSRSNSLSCGYAGLVGALYNLSADLCPSLAKAHLKMAKWTYEMAKIENFPNISPFALYQFGQTAQENEELWRSLDATSLVNLEKQVRKIVPDAMRASVLLSPNNPYLLLWEAASAHRRKFLCITVSSYFQFIHNMSGDFECLPYSKREETTLATLRILEMLVKHGEVLVDVINDGLSRTNVHVWKEILPQLFARLSHPSDHIRKTLVDLISRVCTAAPHAVVFQVVSGAASSTEVSDLEEQQNDDRNRVRACCEQLETKMAQSYPNLVRDVRQFVAELERINLLNEEKWSVVLGTMEHEMEKRLALIKAENAKTDFSMHLMPKQKDEIISKKTKLLTRQIFDVLDELYEKTIVAQPETENEKEFFNTFSEMLTKAHTESKNNRYNSPEASWAPFKNLVSNFAHRTNKKGMQTFQTADISQYLATLGKSCVPMPGQESVEFDRVVSIARVADNVTILPTKTRPKKLGFIGSDGKQLAFLFKGREDLHLDERVMQFLRLCNVMLQSEKGKSRQIAEYQAHHYAVIPLGPRSGLIKWVEGATPIFHIYRKWQMKEKALKQATKKNGETVPEIEKPTNMYHNMIRQAFTAHNIDAIIASDRSKWPAQILEEVFDGLCSKTPTDLISREIWMRANDSTAWWAVTKRYARSLAVMSMVGSVLGLGDRHLDNLLVDLKYGHVVHIDYNICFDKGKILRIPETVPFRLSRNMRHALGPSDMYGTFRESCVHVLSTLRSGHQVLTMLLDAFVFDPLVDWTSHDNISTSGGVSLALQLAVYGSSWKAKARERLTDTIELFQLRVTELQALWMSNREDLYHWMKQVTDCLLAEQSIMGMNGAYAQQRVKAGTELREAVARHQALAKEFRPLIRVIGKEKEEFADYLKFYKQAFIDPLLKGHSALRHELDIDTCVQNFNIVMQNIDVVFMSLISLSTMPIDSVSSRASQKQFNAPPGLENVWVLQQEQQENSQAREVVRRVERRLNGWLDGSAPDRKLSPREEADVLIAEATSSANLAQMYEGWTAWV.

Residues 779-791 (NRKSSDKKPKSTT) show a composition bias toward basic and acidic residues. The segment at 779–798 (NRKSSDKKPKSTTEDVPPPA) is disordered. In terms of domain architecture, FAT spans 1045–1528 (ARERLQLVES…VFQVVSGAAS (484 aa)). The HEAT repeat unit spans residues 1478 to 1514 (VHVWKEILPQLFARLSHPSDHIRKTLVDLISRVCTAA). Positions 1746–2091 (VADNVTILPT…DTIELFQLRV (346 aa)) constitute a PI3K/PI4K catalytic domain. Residues 1752 to 1758 (ILPTKTR) form a G-loop region. The segment at 1954-1962 (GLGDRHLDN) is catalytic loop. The activation loop stretch occupies residues 1974-1998 (HIDYNICFDKGKILRIPETVPFRLS). Residues 2281 to 2313 (RKLSPREEADVLIAEATSSANLAQMYEGWTAWV) enclose the FATC domain.

Belongs to the PI3/PI4-kinase family. As to quaternary structure, component of a post-splicing multiprotein NMD complex. Mn(2+) serves as cofactor.

Its subcellular location is the cytoplasm. It catalyses the reaction L-seryl-[protein] + ATP = O-phospho-L-seryl-[protein] + ADP + H(+). The catalysed reaction is L-threonyl-[protein] + ATP = O-phospho-L-threonyl-[protein] + ADP + H(+). Functionally, serine/threonine protein kinase involved in mRNA surveillance. Recognizes the substrate consensus sequence [ST]-Q. Involved in nonsense-mediated decay (NMD) of mRNAs containing premature stop codons by phosphorylating smg-2. The polypeptide is Serine/threonine-protein kinase smg-1 (smg-1) (Caenorhabditis briggsae).